Here is a 979-residue protein sequence, read N- to C-terminus: Zinc finger BED domain-containing protein 6 (979 aa).

Residues 1–89 (MSVCTLSVPV…ILAKKFSKDL (89 aa)) are required for nucleolar localization. A BED-type 1 zinc finger spans residues 130–187 (AKTSIVWHFFHVDPQYTWRAICNLCEKSVSRGKPGSHLGTSTLQRHLQARHSPHWTRA). Positions 151, 154, 175, and 180 each coordinate Zn(2+). Residues 207–232 (PSSGSNGSFEYIPTDPLDDNRMGKKH) form a disordered region. The BED-type 2 zinc finger occupies 264-321 (AKTSAVWNFFYTDPQHISRAVCNICKRSVSRGRPGSHLGTSTLQRHLQATHPIHWAVA). 4 residues coordinate Zn(2+): C285, C288, H309, and H314. Positions 333 to 383 (DEAETERSDLLSDTLHGEKSTGSQDLTAEDLSDSDSDEPMLEVENRSESPI) are disordered. Basic and acidic residues predominate over residues 337 to 351 (TERSDLLSDTLHGEK). Residues 359-373 (TAEDLSDSDSDEPML) are compositionally biased toward acidic residues. S381 bears the Phosphoserine mark. Residues 866–948 (VVDEYFKEKY…EQLMFLKMNL (83 aa)) form an HATC (Hobo-Ac-Tam3) domain region.

In terms of tissue distribution, expressed in pancreatic islet cells (at protein level).

Its subcellular location is the nucleus. It localises to the nucleolus. The protein localises to the cytoplasm. Transcriptional repressor which binds to the consensus sequence 5'-GCTCGC-3', transcription regulation may be tissue-specific. Regulates the expression of target genes such as: IGF2, PGAP6/TMEM8, ENHO, and PIANP. Acts as a transcriptional repressor of growth factor IGF2, thereby negatively regulating postnatal growth of muscles and internal organs, especially in females. Negatively regulates myoblast differentiation and myoblast mitochondrial activity via its regulation of IGF2 transcription. Negatively regulates the cell cycle of myoblasts, potentially via transcriptional regulation of the E2F family of transcription factors such as: E2F1 and E2F2. Positively regulates the cell cycle and survival of pancreatic beta cells. Binds to the CDH2 gene and may directly repress CDH2 transcription. Probably by controlling CDH2 expression, regulates pancreatic beta cell adhesion, and formation of cell-to-cell junctions between pancreatic beta cells and neural crest stem cells. May also play a role in embryonic beta cell differentiation. May play a role in insulin sensitivity and glucose clearance. The protein is Zinc finger BED domain-containing protein 6 of Homo sapiens (Human).